A 1516-amino-acid polypeptide reads, in one-letter code: Myosin-52 (1516 aa).

Positions 7-62 (YKGLQCWIPDEQSQWIPGSIKDCRVEGEKAFLTVQDENENETVITVKPDDLNYEGR) constitute a Myosin N-terminal SH3-like domain. Residues 73–766 (SDADDLTDLS…VTPLLESARD (694 aa)) form the Myosin motor domain. 167 to 174 (GESGAGKT) serves as a coordination point for ATP. The tract at residues 647–669 (LVSLMSTINETNAHYIRCIKPNE) is actin-binding. IQ domains lie at 793-813 (RKRVRSFQAVAHGFLSRRHTE), 818-838 (SSNIIKLQSLWRTALKRKEFI), 840-865 (TKNSILKVQSIIRGFLLRQTLEEKTK), 866-886 (HDATLIIQSLWLTFKAHKHYK), and 888-917 (LQYYAVRIQSLWRMKLAKRQLTELKIESTK). Residues 926–1034 (YRLESRLFEI…LKSQLKNYDM (109 aa)) are a coiled coil. 2 positions are modified to phosphoserine: Ser-1065 and Ser-1072. The Dilute domain occupies 1163–1431 (ERYCVHTLEY…SELSKNIVAE (269 aa)).

Belongs to the TRAFAC class myosin-kinesin ATPase superfamily. Myosin family.

The protein localises to the cytoplasm. In terms of biological role, involved in cell wall deposition where it has a role in the localization of mok1. This is Myosin-52 (myo52) from Schizosaccharomyces pombe (strain 972 / ATCC 24843) (Fission yeast).